We begin with the raw amino-acid sequence, 670 residues long: Lebercilin-like protein (670 aa).

The tract at residues 30-51 (KRSPGTGDFSRNSNASNKSVDY) is disordered. A compositionally biased stretch (polar residues) spans 38 to 51 (FSRNSNASNKSVDY). Coiled coils occupy residues 148 to 259 (LHKI…EREE) and 305 to 336 (AAQTATKTLQVEVKHLQQKLKEKDRELEIKNI). The disordered stretch occupies residues 374-393 (HQGTQKSDVPPLTTKGKKAT). Positions 420 to 440 (EDSKRKYEDLSGEEKHLEVQI) form a coiled coil. Disordered stretches follow at residues 495–516 (RSMQRNGVDDTLGKGTAPYTKG), 557–580 (KHLSNREEMELEHSDSGYEPSFGK), and 609–670 (LKTD…KIII). Composition is skewed to basic and acidic residues over residues 560 to 572 (SNREEMELEHSDS) and 621 to 632 (GSEEPLQSKESH). The segment covering 651–662 (TVVNSIKPSSPT) has biased composition (polar residues).

This sequence belongs to the LCA5 family.

The sequence is that of Lebercilin-like protein (LCA5L) from Homo sapiens (Human).